The primary structure comprises 241 residues: Carboxy-S-adenosyl-L-methionine synthase (241 aa).

Residues Tyr38, 63–65 (GCS), 88–89 (DN), 116–117 (DI), Asn131, and Arg198 each bind S-adenosyl-L-methionine.

This sequence belongs to the class I-like SAM-binding methyltransferase superfamily. Cx-SAM synthase family. As to quaternary structure, homodimer.

It catalyses the reaction prephenate + S-adenosyl-L-methionine = carboxy-S-adenosyl-L-methionine + 3-phenylpyruvate + H2O. Catalyzes the conversion of S-adenosyl-L-methionine (SAM) to carboxy-S-adenosyl-L-methionine (Cx-SAM). This Haemophilus influenzae (strain 86-028NP) protein is Carboxy-S-adenosyl-L-methionine synthase.